A 491-amino-acid polypeptide reads, in one-letter code: Glutamyl-tRNA(Gln) amidotransferase subunit A (491 aa).

Active-site charge relay system residues include Lys-78 and Ser-158. Ser-182 acts as the Acyl-ester intermediate in catalysis.

Belongs to the amidase family. GatA subfamily. As to quaternary structure, heterotrimer of A, B and C subunits.

The catalysed reaction is L-glutamyl-tRNA(Gln) + L-glutamine + ATP + H2O = L-glutaminyl-tRNA(Gln) + L-glutamate + ADP + phosphate + H(+). Functionally, allows the formation of correctly charged Gln-tRNA(Gln) through the transamidation of misacylated Glu-tRNA(Gln) in organisms which lack glutaminyl-tRNA synthetase. The reaction takes place in the presence of glutamine and ATP through an activated gamma-phospho-Glu-tRNA(Gln). This Bradyrhizobium sp. (strain BTAi1 / ATCC BAA-1182) protein is Glutamyl-tRNA(Gln) amidotransferase subunit A.